We begin with the raw amino-acid sequence, 335 residues long: GTPase Obg (335 aa).

In terms of domain architecture, Obg spans 1 to 159 (MKFVDSAKIS…IELEMELKLM (159 aa)). Positions 160-323 (ADVGLVGFPN…LKDELWRQIS (164 aa)) constitute an OBG-type G domain. GTP-binding positions include 166–173 (GFPNAGKS), 191–195 (FTTLV), 213–216 (DIPG), 280–283 (TKMD), and 304–306 (SSV). 2 residues coordinate Mg(2+): S173 and T193.

Belongs to the TRAFAC class OBG-HflX-like GTPase superfamily. OBG GTPase family. As to quaternary structure, monomer. Mg(2+) is required as a cofactor.

It is found in the cytoplasm. Functionally, an essential GTPase which binds GTP, GDP and possibly (p)ppGpp with moderate affinity, with high nucleotide exchange rates and a fairly low GTP hydrolysis rate. Plays a role in control of the cell cycle, stress response, ribosome biogenesis and in those bacteria that undergo differentiation, in morphogenesis control. This Chlorobaculum parvum (strain DSM 263 / NCIMB 8327) (Chlorobium vibrioforme subsp. thiosulfatophilum) protein is GTPase Obg.